The sequence spans 356 residues: Phosphoribosylformylglycinamidine cyclo-ligase (356 aa).

It belongs to the AIR synthase family.

It is found in the cytoplasm. It carries out the reaction 2-formamido-N(1)-(5-O-phospho-beta-D-ribosyl)acetamidine + ATP = 5-amino-1-(5-phospho-beta-D-ribosyl)imidazole + ADP + phosphate + H(+). It participates in purine metabolism; IMP biosynthesis via de novo pathway; 5-amino-1-(5-phospho-D-ribosyl)imidazole from N(2)-formyl-N(1)-(5-phospho-D-ribosyl)glycinamide: step 2/2. In Desulfotalea psychrophila (strain LSv54 / DSM 12343), this protein is Phosphoribosylformylglycinamidine cyclo-ligase.